Here is a 354-residue protein sequence, read N- to C-terminus: Methionine import ATP-binding protein MetN 2 (354 aa).

The ABC transporter domain occupies 6–250 (IELKNISVHF…PQKPLTKEFI (245 aa)). 42–49 (GYSGAGKS) serves as a coordination point for ATP.

This sequence belongs to the ABC transporter superfamily. Methionine importer (TC 3.A.1.24) family. The complex is composed of two ATP-binding proteins (MetN), two transmembrane proteins (MetI) and a solute-binding protein (MetQ).

The protein localises to the cell membrane. The catalysed reaction is L-methionine(out) + ATP + H2O = L-methionine(in) + ADP + phosphate + H(+). It carries out the reaction D-methionine(out) + ATP + H2O = D-methionine(in) + ADP + phosphate + H(+). In terms of biological role, part of the ABC transporter complex MetNIQ involved in methionine import. Responsible for energy coupling to the transport system. In Oenococcus oeni (strain ATCC BAA-331 / PSU-1), this protein is Methionine import ATP-binding protein MetN 2.